The chain runs to 314 residues: tRNA dimethylallyltransferase (314 aa).

36 to 43 (GPTASGKT) provides a ligand contact to ATP. 38–43 (TASGKT) is a binding site for substrate. Residues 61–64 (DSVQ) are interaction with substrate tRNA.

This sequence belongs to the IPP transferase family. In terms of assembly, monomer. The cofactor is Mg(2+).

The enzyme catalyses adenosine(37) in tRNA + dimethylallyl diphosphate = N(6)-dimethylallyladenosine(37) in tRNA + diphosphate. In terms of biological role, catalyzes the transfer of a dimethylallyl group onto the adenine at position 37 in tRNAs that read codons beginning with uridine, leading to the formation of N6-(dimethylallyl)adenosine (i(6)A). The protein is tRNA dimethylallyltransferase of Sorangium cellulosum (strain So ce56) (Polyangium cellulosum (strain So ce56)).